A 172-amino-acid chain; its full sequence is Small ribosomal subunit protein uS5 (172 aa).

Positions 15-78 constitute an S5 DRBM domain; that stretch reads YIEKLVNIRR…DKARKRMKSV (64 aa).

Belongs to the universal ribosomal protein uS5 family. Part of the 30S ribosomal subunit. Contacts proteins S4 and S8.

Functionally, with S4 and S12 plays an important role in translational accuracy. In terms of biological role, located at the back of the 30S subunit body where it stabilizes the conformation of the head with respect to the body. The chain is Small ribosomal subunit protein uS5 from Ruthia magnifica subsp. Calyptogena magnifica.